Here is a 156-residue protein sequence, read N- to C-terminus: DNA gyrase inhibitor (156 aa).

The protein belongs to the DNA gyrase inhibitor family. As to quaternary structure, interacts with DNA gyrase.

It localises to the cytoplasm. In terms of biological role, inhibits the supercoiling activity of DNA gyrase. Acts by inhibiting DNA gyrase at an early step, prior to (or at the step of) binding of DNA by the gyrase. It protects cells against toxins that target DNA gyrase, by inhibiting activity of these toxins and reducing the formation of lethal double-strand breaks in the cell. The chain is DNA gyrase inhibitor from Serratia proteamaculans (strain 568).